The primary structure comprises 208 residues: Small ribosomal subunit protein uS4A (208 aa).

One can recognise an S4 RNA-binding domain in the interval 98–164 (TRLDNVVYTL…AKIQSAIQAV (67 aa)).

Belongs to the universal ribosomal protein uS4 family. Part of the 30S ribosomal subunit. Contacts protein S5. The interaction surface between S4 and S5 is involved in control of translational fidelity.

One of the primary rRNA binding proteins, it binds directly to 16S rRNA where it nucleates assembly of the body of the 30S subunit. Its function is as follows. With S5 and S12 plays an important role in translational accuracy. This chain is Small ribosomal subunit protein uS4A, found in Bdellovibrio bacteriovorus (strain ATCC 15356 / DSM 50701 / NCIMB 9529 / HD100).